We begin with the raw amino-acid sequence, 458 residues long: GTPase Der (458 aa).

EngA-type G domains are found at residues 9-171 (KTIA…DLNQ) and 197-368 (IQVG…ECFS). GTP contacts are provided by residues 15–22 (GQPNVGKS), 62–66 (DTGGM), 123–126 (NKID), 203–210 (GRVNVGKS), 250–254 (DTAGI), and 314–317 (NKWD). The 85-residue stretch at 369–453 (KRIPTSLLNS…PLILNAKDKK (85 aa)) folds into the KH-like domain.

It belongs to the TRAFAC class TrmE-Era-EngA-EngB-Septin-like GTPase superfamily. EngA (Der) GTPase family. Associates with the 50S ribosomal subunit.

Functionally, GTPase that plays an essential role in the late steps of ribosome biogenesis. This Helicobacter pylori (strain ATCC 700392 / 26695) (Campylobacter pylori) protein is GTPase Der.